Here is a 336-residue protein sequence, read N- to C-terminus: IgLON family member 5 (336 aa).

Residues 1-30 (MPPPAPGARLRLLAAAALAGLAVISRGLLS) form the signal peptide. Ig-like C2-type domains are found at residues 33-122 (LEFS…QPYT), 132-213 (PARI…VLVT), and 218-307 (PTIT…MRLL). N-linked (GlcNAc...) asparagine glycosylation is found at Asn41, Asn49, Asn67, and Asn137. A disulfide bridge links Cys54 with Cys112. Intrachain disulfides connect Cys154–Cys195 and Cys238–Cys291. An N-linked (GlcNAc...) asparagine glycan is attached at Asn288.

Belongs to the immunoglobulin superfamily. IgLON family.

The protein localises to the secreted. This is IgLON family member 5 (Iglon5) from Mus musculus (Mouse).